The primary structure comprises 284 residues: RNase adapter protein RapZ (284 aa).

8-15 (GRSGSGKS) serves as a coordination point for ATP. 56-59 (DVRN) contacts GTP. An RNA-binding region spans residues 266 to 284 (RARGKNVQSRHRTLEKRKQ).

It belongs to the RapZ-like family. RapZ subfamily. In terms of assembly, homotrimer.

In terms of biological role, modulates the synthesis of GlmS, by affecting the processing and stability of the regulatory small RNA GlmZ. When glucosamine-6-phosphate (GlcN6P) concentrations are high in the cell, RapZ binds GlmZ and targets it to cleavage by RNase E. Consequently, GlmZ is inactivated and unable to activate GlmS synthesis. Under low GlcN6P concentrations, RapZ is sequestered and inactivated by an other regulatory small RNA, GlmY, preventing GlmZ degradation and leading to synthesis of GlmS. The sequence is that of RNase adapter protein RapZ from Yersinia pseudotuberculosis serotype O:1b (strain IP 31758).